Reading from the N-terminus, the 39-residue chain is QVRKYCPKVGYCSSKCSKADVWSLSSDCKFYCCLPPGWK.

Position 1 is a pyrrolidone carboxylic acid (glutamine 1). 3 cysteine pairs are disulfide-bonded: cysteine 6–cysteine 33, cysteine 12–cysteine 28, and cysteine 16–cysteine 32.

The protein belongs to the transferrin family.

The sequence is that of Cygnin from Cygnus atratus (Black swan).